The chain runs to 361 residues: MLCIGIETSCDETGLALVRDGRLVHAVMSSQADIHALFGGVVPEIASREHYRLIGPLYDLLLREAGVGPTELDAVAVARGPGLLGSLLVGMAFAKGLALGFDIPLVGVNHLHAHLLAAGLERELVFPALGLLVSGGHTHIYRIESPVSFRLLGRTLDDAAGEAYDKVAKMLRLPYPGGRILDQQGRRGIADPRLFPRPYTDNDNLDFSFSGLKTAVQTHLSRHPELVPSPDAAQAVAGGHDAPEGLRNMCASFNEAVAETLCIKLGRALDGDDGVGVRALIVAGGVAANSYVREHTARLAVSRGLELIVPSPPLCTDNGSMIAYAGWLLRQGGLSHSLDLEAVPRGRAIPDDYRQGPAGCS.

2 residues coordinate Fe cation: H110 and H114. Residues 132–136 (LVSGG), D165, G178, D182, and N289 each bind substrate. A Fe cation-binding site is contributed by D317.

Belongs to the KAE1 / TsaD family. It depends on Fe(2+) as a cofactor.

Its subcellular location is the cytoplasm. It carries out the reaction L-threonylcarbamoyladenylate + adenosine(37) in tRNA = N(6)-L-threonylcarbamoyladenosine(37) in tRNA + AMP + H(+). In terms of biological role, required for the formation of a threonylcarbamoyl group on adenosine at position 37 (t(6)A37) in tRNAs that read codons beginning with adenine. Is involved in the transfer of the threonylcarbamoyl moiety of threonylcarbamoyl-AMP (TC-AMP) to the N6 group of A37, together with TsaE and TsaB. TsaD likely plays a direct catalytic role in this reaction. This chain is tRNA N6-adenosine threonylcarbamoyltransferase, found in Nitratidesulfovibrio vulgaris (strain ATCC 29579 / DSM 644 / CCUG 34227 / NCIMB 8303 / VKM B-1760 / Hildenborough) (Desulfovibrio vulgaris).